A 553-amino-acid chain; its full sequence is Transcriptional regulator HilA (553 aa).

Positions 11–107 (NKKFVFDDFI…LYGQGYRFNR (97 aa)) form a DNA-binding region, ompR/PhoB-type. Residue aspartate 62 is modified to 4-aspartylphosphate. The stretch at 372–405 (ADIKYYYGWNLFMAGQLEEALQTINECLKLDPTR) is one TPR repeat.

Its function is as follows. The main transcriptional regulator of the Salmonella pathogenicity island 1 (SPI1) gene expression. Activates the expression of invasion genes by a direct action at their promoters and also indirectly by increasing the level of invF. Also binds upstream of prgH and directly activates the expression of prgHIJK operon. The protein is Transcriptional regulator HilA (hilA) of Salmonella paratyphi A (strain ATCC 9150 / SARB42).